A 197-amino-acid polypeptide reads, in one-letter code: Putative sulfur carrier protein aq_1421 (197 aa).

Catalysis depends on cysteine 17, which acts as the Cysteine persulfide intermediate.

The protein belongs to the sulfur carrier protein TusA family.

The chain is Putative sulfur carrier protein aq_1421 from Aquifex aeolicus (strain VF5).